The chain runs to 425 residues: Serine hydroxymethyltransferase 2 (425 aa).

(6S)-5,6,7,8-tetrahydrofolate is bound by residues leucine 121 and 125–127; that span reads GHL. An N6-(pyridoxal phosphate)lysine modification is found at lysine 230.

The protein belongs to the SHMT family. Homodimer. Pyridoxal 5'-phosphate serves as cofactor.

It is found in the cytoplasm. It catalyses the reaction (6R)-5,10-methylene-5,6,7,8-tetrahydrofolate + glycine + H2O = (6S)-5,6,7,8-tetrahydrofolate + L-serine. The protein operates within one-carbon metabolism; tetrahydrofolate interconversion. Its pathway is amino-acid biosynthesis; glycine biosynthesis; glycine from L-serine: step 1/1. In terms of biological role, catalyzes the reversible interconversion of serine and glycine with tetrahydrofolate (THF) serving as the one-carbon carrier. This reaction serves as the major source of one-carbon groups required for the biosynthesis of purines, thymidylate, methionine, and other important biomolecules. Also exhibits THF-independent aldolase activity toward beta-hydroxyamino acids, producing glycine and aldehydes, via a retro-aldol mechanism. The sequence is that of Serine hydroxymethyltransferase 2 from Mycobacterium tuberculosis (strain CDC 1551 / Oshkosh).